We begin with the raw amino-acid sequence, 396 residues long: Ribosomal RNA large subunit methyltransferase I (396 aa).

The PUA domain occupies 2–79 (SVFIYLVKGR…KEETVDLDFF (78 aa)).

The protein belongs to the methyltransferase superfamily. RlmI family.

It is found in the cytoplasm. The catalysed reaction is cytidine(1962) in 23S rRNA + S-adenosyl-L-methionine = 5-methylcytidine(1962) in 23S rRNA + S-adenosyl-L-homocysteine + H(+). Functionally, specifically methylates the cytosine at position 1962 (m5C1962) of 23S rRNA. This chain is Ribosomal RNA large subunit methyltransferase I, found in Aeromonas salmonicida (strain A449).